A 344-amino-acid chain; its full sequence is Phosphoribosylformylglycinamidine cyclo-ligase (344 aa).

The protein belongs to the AIR synthase family.

It is found in the cytoplasm. It catalyses the reaction 2-formamido-N(1)-(5-O-phospho-beta-D-ribosyl)acetamidine + ATP = 5-amino-1-(5-phospho-beta-D-ribosyl)imidazole + ADP + phosphate + H(+). Its pathway is purine metabolism; IMP biosynthesis via de novo pathway; 5-amino-1-(5-phospho-D-ribosyl)imidazole from N(2)-formyl-N(1)-(5-phospho-D-ribosyl)glycinamide: step 2/2. This chain is Phosphoribosylformylglycinamidine cyclo-ligase, found in Exiguobacterium sp. (strain ATCC BAA-1283 / AT1b).